Consider the following 318-residue polypeptide: uncharacterized protein (318 aa).

2 helical membrane-spanning segments follow: residues 230 to 250 (VWTYLGSIISLLSLAYASFLI) and 264 to 284 (ASLMVAILFLGGVQLISLGVI).

Belongs to the glycosyltransferase 2 family. GtrB subfamily.

It is found in the cell membrane. This is an uncharacterized protein from Synechocystis sp. (strain ATCC 27184 / PCC 6803 / Kazusa).